We begin with the raw amino-acid sequence, 531 residues long: L-aspartate oxidase (531 aa).

Residues 11–14 (SGAA), Lys-33, 40–47 (NSVYAQGG), 151–152 (TA), and Asp-205 each bind FAD. Arg-272 (proton donor/acceptor) is an active-site residue. FAD-binding positions include Glu-353 and 369-370 (SL).

It belongs to the FAD-dependent oxidoreductase 2 family. NadB subfamily. Monomer. Homodimer. FAD serves as cofactor.

Its subcellular location is the cytoplasm. It catalyses the reaction L-aspartate + O2 = iminosuccinate + H2O2. It carries out the reaction fumarate + L-aspartate = iminosuccinate + succinate. Its pathway is cofactor biosynthesis; NAD(+) biosynthesis; iminoaspartate from L-aspartate (oxidase route): step 1/1. In terms of biological role, catalyzes the oxidation of L-aspartate to iminoaspartate, the first step in the de novo biosynthesis of NAD(+). Can use either oxygen or fumarate as electron acceptors, which allows the enzyme to be functional under aerobic and anaerobic conditions. The protein is L-aspartate oxidase of Bacillus subtilis (strain 168).